A 129-amino-acid chain; its full sequence is Lysozyme C (129 aa).

In terms of domain architecture, C-type lysozyme spans 1-129; it reads KVYGRCELAA…VNAWTRGCRL (129 aa). Cystine bridges form between C6/C127, C30/C115, C64/C80, and C76/C94. Residues E35 and D52 contribute to the active site.

The protein belongs to the glycosyl hydrolase 22 family. As to quaternary structure, monomer.

The protein resides in the secreted. It carries out the reaction Hydrolysis of (1-&gt;4)-beta-linkages between N-acetylmuramic acid and N-acetyl-D-glucosamine residues in a peptidoglycan and between N-acetyl-D-glucosamine residues in chitodextrins.. In terms of biological role, lysozymes have primarily a bacteriolytic function; those in tissues and body fluids are associated with the monocyte-macrophage system and enhance the activity of immunoagents. The protein is Lysozyme C (LYZ) of Syrmaticus soemmerringii (Copper pheasant).